The chain runs to 601 residues: Glutamine--fructose-6-phosphate aminotransferase [isomerizing] (601 aa).

C2 serves as the catalytic Nucleophile; for GATase activity. One can recognise a Glutamine amidotransferase type-2 domain in the interval 2–218 (CGIVGYIGYD…DHEIVIVKKD (217 aa)). 2 SIS domains span residues 284–423 (IIND…EHGR) and 453–591 (IATD…VDKP). Residue K596 is the For Fru-6P isomerization activity of the active site.

In terms of assembly, homodimer.

It localises to the cytoplasm. It carries out the reaction D-fructose 6-phosphate + L-glutamine = D-glucosamine 6-phosphate + L-glutamate. Its function is as follows. Catalyzes the first step in hexosamine metabolism, converting fructose-6P into glucosamine-6P using glutamine as a nitrogen source. This is Glutamine--fructose-6-phosphate aminotransferase [isomerizing] from Staphylococcus aureus (strain MRSA252).